The sequence spans 189 residues: Large ribosomal subunit protein uL5 (189 aa).

This sequence belongs to the universal ribosomal protein uL5 family. As to quaternary structure, part of the 50S ribosomal subunit; part of the 5S rRNA/L5/L18/L25 subcomplex. Contacts the 5S rRNA and the P site tRNA. Forms a bridge to the 30S subunit in the 70S ribosome.

Functionally, this is one of the proteins that bind and probably mediate the attachment of the 5S RNA into the large ribosomal subunit, where it forms part of the central protuberance. In the 70S ribosome it contacts protein S13 of the 30S subunit (bridge B1b), connecting the 2 subunits; this bridge is implicated in subunit movement. Contacts the P site tRNA; the 5S rRNA and some of its associated proteins might help stabilize positioning of ribosome-bound tRNAs. The chain is Large ribosomal subunit protein uL5 from Kocuria rhizophila (strain ATCC 9341 / DSM 348 / NBRC 103217 / DC2201).